Here is a 431-residue protein sequence, read N- to C-terminus: GTPase Obg (431 aa).

Positions methionine 1–leucine 158 constitute an Obg domain. The region spanning alanine 159–aspartate 335 is the OBG-type G domain. Residues glycine 165 to serine 172, phenylalanine 190 to valine 194, aspartate 212 to glycine 215, threonine 282 to aspartate 285, and serine 316 to isoleucine 318 each bind GTP. The Mg(2+) site is built by serine 172 and threonine 192. Residues tyrosine 353–aspartate 431 form the OCT domain.

This sequence belongs to the TRAFAC class OBG-HflX-like GTPase superfamily. OBG GTPase family. In terms of assembly, monomer. Mg(2+) serves as cofactor.

The protein resides in the cytoplasm. An essential GTPase which binds GTP, GDP and possibly (p)ppGpp with moderate affinity, with high nucleotide exchange rates and a fairly low GTP hydrolysis rate. Plays a role in control of the cell cycle, stress response, ribosome biogenesis and in those bacteria that undergo differentiation, in morphogenesis control. The polypeptide is GTPase Obg (Lactiplantibacillus plantarum (strain ATCC BAA-793 / NCIMB 8826 / WCFS1) (Lactobacillus plantarum)).